A 644-amino-acid chain; its full sequence is Exoribonuclease 2 (644 aa).

The RNB domain occupies Arg190–Ile516. Residues Asp562–Val644 form the S1 motif domain.

This sequence belongs to the RNR ribonuclease family. RNase II subfamily.

The protein resides in the cytoplasm. It carries out the reaction Exonucleolytic cleavage in the 3'- to 5'-direction to yield nucleoside 5'-phosphates.. Functionally, involved in mRNA degradation. Hydrolyzes single-stranded polyribonucleotides processively in the 3' to 5' direction. This is Exoribonuclease 2 from Sodalis glossinidius (strain morsitans).